A 314-amino-acid polypeptide reads, in one-letter code: Probable UDP-sugar transporter protein SLC35A4 (314 aa).

Topologically, residues 1 to 20 (MIAISADESPESSSPALRLR) are cytoplasmic. The helical transmembrane segment at 21 to 41 (WLFLLLLLVLIYGSHAPLLSL) threads the bilayer. Residues 42–54 (CKTQAQIPFSASS) are Lumenal-facing. A helical transmembrane segment spans residues 55–75 (CVLLIETSKLFISFASLLASG). The Cytoplasmic segment spans residues 76–88 (SVSTLRISISMTT). Residues 89-109 (ASPYAVPAVLYAFNNHLVVFM) traverse the membrane as a helical segment. Over 110 to 145 (QAYMDPSSFQVLSNLKIASTALLYTSCLGKRLHRRQ) the chain is Lumenal. A helical transmembrane segment spans residues 146 to 166 (WFAMGLLVSAGVSHSCFSYDL). Residues 167-175 (EGKRETAVY) lie on the Cytoplasmic side of the membrane. The helical transmembrane segment at 176–196 (ITSWGLLLVLVYCFVSGLAAV) threads the bilayer. The Lumenal segment spans residues 197-206 (YTERVLKSQR). A helical membrane pass occupies residues 207–227 (LPLSMQNLFLYTFGVVVNLAS). At 228–242 (HLSGGEQKGFFEGYS) the chain is on the cytoplasmic side. A helical membrane pass occupies residues 243–263 (AVVWVIVAGQVANGLLMSVVM). Over 264–267 (KHGT) the chain is Lumenal. Residues 268 to 290 (GITRLFVISSAMLVNAVLSWGIL) traverse the membrane as a helical segment. At 291-314 (GVQLTGYFLFPVVLIGWAVYLYYT) the chain is on the cytoplasmic side.

It belongs to the nucleotide-sugar transporter family. SLC35A subfamily.

The protein resides in the golgi apparatus membrane. The catalysed reaction is CDP-L-ribitol(in) + CDP(out) = CDP-L-ribitol(out) + CDP(in). Functionally, mediates the transport of CDP-ribitol. Does not exhibit CMP-sialic acid, UDP-galactose and UDP-N-acetylglucosamine transport activity. The sequence is that of Probable UDP-sugar transporter protein SLC35A4 from Danio rerio (Zebrafish).